The primary structure comprises 459 residues: Ribosomal protein uS12 methylthiotransferase RimO (459 aa).

The region spanning 11–126 is the MTTase N-terminal domain; sequence PKVGMVSLGC…VMQAVHSHLP (116 aa). 6 residues coordinate [4Fe-4S] cluster: C20, C56, C85, C157, C161, and C164. A Radical SAM core domain is found at 143–388; that stretch reads LTPRHYAYLK…MEVAEEVSAA (246 aa). The 69-residue stretch at 391 to 459 folds into the TRAM domain; sequence ARKVGKTLKV…ADGHDLWGEV (69 aa).

It belongs to the methylthiotransferase family. RimO subfamily. [4Fe-4S] cluster is required as a cofactor.

It is found in the cytoplasm. It catalyses the reaction L-aspartate(89)-[ribosomal protein uS12]-hydrogen + (sulfur carrier)-SH + AH2 + 2 S-adenosyl-L-methionine = 3-methylsulfanyl-L-aspartate(89)-[ribosomal protein uS12]-hydrogen + (sulfur carrier)-H + 5'-deoxyadenosine + L-methionine + A + S-adenosyl-L-homocysteine + 2 H(+). Functionally, catalyzes the methylthiolation of an aspartic acid residue of ribosomal protein uS12. This is Ribosomal protein uS12 methylthiotransferase RimO from Burkholderia pseudomallei (strain K96243).